The chain runs to 169 residues: Non-specific lipid transfer protein GPI-anchored 11 (169 aa).

The signal sequence occupies residues M1–A23. 4 disulfide bridges follow: C27–C70, C37–C54, C55–C95, and C68–C105. Residue S146 is the site of GPI-anchor amidated serine attachment. The propeptide at S147–Y169 is removed in mature form.

This sequence belongs to the plant LTP family. Expressed in a vascular-specific manner, mainly in roots, and, to a lower extent, in hypocotyls, seedlings stems and flowers.

The protein localises to the cell membrane. The protein resides in the secreted. Probable lipid transfer protein. Proteoglycan-like factor that exhibits xylogen activity consisting in mediating local and inductive cell-cell interactions required for xylem differentiation. In Arabidopsis thaliana (Mouse-ear cress), this protein is Non-specific lipid transfer protein GPI-anchored 11.